The primary structure comprises 130 residues: Small ribosomal subunit protein uS11c (130 aa).

Belongs to the universal ribosomal protein uS11 family. In terms of assembly, part of the 30S ribosomal subunit.

It localises to the plastid. Its subcellular location is the chloroplast. This is Small ribosomal subunit protein uS11c from Angiopteris evecta (Mule's foot fern).